The chain runs to 233 residues: Snake venom serine protease BthaTL (233 aa).

The Peptidase S1 domain maps to 1-224; sequence VIGGDECDIN…YLPWIQSIIA (224 aa). 6 disulfides stabilise this stretch: Cys7-Cys138, Cys25-Cys41, Cys73-Cys231, Cys117-Cys185, Cys149-Cys164, and Cys175-Cys200. Catalysis depends on charge relay system residues His40 and Asp85. The active-site Charge relay system is Ser179.

The protein belongs to the peptidase S1 family. Snake venom subfamily. Monomer. As to expression, expressed by the venom gland.

The protein localises to the secreted. In terms of biological role, snake venom serine protease that may act in the hemostasis system of the prey. The chain is Snake venom serine protease BthaTL from Bothrops alternatus (Urutu).